The chain runs to 196 residues: Molybdenum cofactor guanylyltransferase (196 aa).

GTP is bound by residues 12-14 (LAG), lysine 25, asparagine 53, aspartate 71, and aspartate 101. Mg(2+) is bound at residue aspartate 101.

This sequence belongs to the MobA family. As to quaternary structure, monomer. Mg(2+) serves as cofactor.

It is found in the cytoplasm. It catalyses the reaction Mo-molybdopterin + GTP + H(+) = Mo-molybdopterin guanine dinucleotide + diphosphate. In terms of biological role, transfers a GMP moiety from GTP to Mo-molybdopterin (Mo-MPT) cofactor (Moco or molybdenum cofactor) to form Mo-molybdopterin guanine dinucleotide (Mo-MGD) cofactor. The polypeptide is Molybdenum cofactor guanylyltransferase (Bordetella petrii (strain ATCC BAA-461 / DSM 12804 / CCUG 43448)).